Reading from the N-terminus, the 183-residue chain is Ribosome rescue factor SmrB (183 aa).

A Smr domain is found at 98–173 (LDLHGLTQMQ…GDAALLVLIE (76 aa)).

The protein belongs to the SmrB family. As to quaternary structure, associates with collided ribosomes, but not with correctly translating polysomes.

Acts as a ribosome collision sensor. Detects stalled/collided disomes (pairs of ribosomes where the leading ribosome is stalled and a second ribosome has collided with it) and endonucleolytically cleaves mRNA at the 5' boundary of the stalled ribosome. Stalled/collided disomes form a new interface (primarily via the 30S subunits) that binds SmrB. Cleaved mRNA becomes available for tmRNA ligation, leading to ribosomal subunit dissociation and rescue of stalled ribosomes. The protein is Ribosome rescue factor SmrB of Enterobacter sp. (strain 638).